A 91-amino-acid polypeptide reads, in one-letter code: Sm-like protein LSM36B (91 aa).

The Sm domain maps to 14-86 (TPADFLKSIR…VLYISTTKGT (73 aa)).

The protein belongs to the snRNP Sm proteins family. Component of the heptameric LSM1-LSM7 complex that forms a seven-membered ring structure with a donut shape. The LSM subunits are arranged in the order LSM1, LSM2, LSM3, LSM6, LSM5, LSM7 and LSM4. Component of the heptameric LSM2-LSM8 complex that forms a seven-membered ring structure with a donut shape. The LSM subunits are arranged in the order LSM8, LSM2, LSM3, LSM6, LSM5, LSM7 and LSM4. LSM6B subunit interacts only with its two neighboring subunits, LSM3A or LSM3B and LSM5. In terms of tissue distribution, expressed in roots, leaves, stems, flowers and siliques.

The protein resides in the cytoplasm. It localises to the nucleus. In terms of biological role, component of LSM protein complexes, which are involved in RNA processing. Component of the cytoplasmic LSM1-LSM7 complex which is involved in mRNA degradation by promoting decapping and leading to accurate 5'-3' mRNA decay. The cytoplasmic LSM1-LSM7 complex regulates developmental gene expression by the decapping of specific development-related transcripts. Component of the nuclear LSM2-LSM8 complex which is involved splicing nuclear mRNAs. LSM2-LSM8 binds directly to the U6 small nuclear RNAs (snRNAs) and is essential for accurate splicing of selected development-related mRNAs through the stabilization of the spliceosomal U6 snRNA. Plays a critical role in the regulation of development-related gene expression. The sequence is that of Sm-like protein LSM36B from Arabidopsis thaliana (Mouse-ear cress).